The chain runs to 428 residues: Putative zinc metalloprotease SA1105 (428 aa).

His21 lines the Zn(2+) pocket. The active site involves Glu22. Zn(2+) is bound at residue His25. 4 helical membrane passes run 172–194 (FLTL…IGLA), 309–331 (GSTL…GFSF), 352–374 (IISL…LIPI), and 401–420 (TTII…LVTW). The region spanning 186–269 (ALVLFIGLAY…TKSVELTPKK (84 aa)) is the PDZ domain.

The protein belongs to the peptidase M50B family. Requires Zn(2+) as cofactor.

It localises to the cell membrane. This chain is Putative zinc metalloprotease SA1105, found in Staphylococcus aureus (strain N315).